A 434-amino-acid chain; its full sequence is Nicotinate phosphoribosyltransferase (434 aa).

Position 242 is a phosphohistidine; by autocatalysis (H242).

This sequence belongs to the NAPRTase family. In terms of processing, transiently phosphorylated on a His residue during the reaction cycle. Phosphorylation strongly increases the affinity for substrates and increases the rate of nicotinate D-ribonucleotide production. Dephosphorylation regenerates the low-affinity form of the enzyme, leading to product release.

It catalyses the reaction nicotinate + 5-phospho-alpha-D-ribose 1-diphosphate + ATP + H2O = nicotinate beta-D-ribonucleotide + ADP + phosphate + diphosphate. It participates in cofactor biosynthesis; NAD(+) biosynthesis; nicotinate D-ribonucleotide from nicotinate: step 1/1. Catalyzes the synthesis of beta-nicotinate D-ribonucleotide from nicotinate and 5-phospho-D-ribose 1-phosphate at the expense of ATP. The polypeptide is Nicotinate phosphoribosyltransferase (Bartonella tribocorum (strain CIP 105476 / IBS 506)).